A 376-amino-acid polypeptide reads, in one-letter code: 23S rRNA (uracil(747)-C(5))-methyltransferase RlmC (376 aa).

Residues Cys3, Cys11, Cys14, and Cys88 each contribute to the [4Fe-4S] cluster site. S-adenosyl-L-methionine contacts are provided by Gln213, Phe242, Glu263, and Asn308. Catalysis depends on Cys335, which acts as the Nucleophile.

The protein belongs to the class I-like SAM-binding methyltransferase superfamily. RNA M5U methyltransferase family. RlmC subfamily.

It catalyses the reaction uridine(747) in 23S rRNA + S-adenosyl-L-methionine = 5-methyluridine(747) in 23S rRNA + S-adenosyl-L-homocysteine + H(+). Its function is as follows. Catalyzes the formation of 5-methyl-uridine at position 747 (m5U747) in 23S rRNA. This is 23S rRNA (uracil(747)-C(5))-methyltransferase RlmC from Vibrio vulnificus (strain CMCP6).